The primary structure comprises 196 residues: MNLVVIEGIDASGKTTLAKRLAESLSPRFKVLLTQEPFTDDIKQLLEKYQWKDQVLLALLFSADRRIHVKWMESQNVDLIISDRYFFSTLAYQGVGVDRTWLESLSSIFPLPNLTILLDVPVNVALERLRNKRDSLDFEEKRKSLHQVRENYLSLARRYNFKILDGTLPLEKLTSISLELVQGLLSSSTSRGSQGT.

Position 8-15 (8-15) interacts with ATP; sequence GIDASGKT.

It belongs to the thymidylate kinase family.

It catalyses the reaction dTMP + ATP = dTDP + ADP. This is Probable thymidylate kinase from Metallosphaera sedula (strain ATCC 51363 / DSM 5348 / JCM 9185 / NBRC 15509 / TH2).